The following is a 297-amino-acid chain: Phosphatidylserine decarboxylase proenzyme (297 aa).

Residues Asp100, His157, and Ser263 each act as charge relay system; for autoendoproteolytic cleavage activity in the active site. The active-site Schiff-base intermediate with substrate; via pyruvic acid; for decarboxylase activity is Ser263. Pyruvic acid (Ser); by autocatalysis is present on Ser263.

This sequence belongs to the phosphatidylserine decarboxylase family. PSD-B subfamily. Prokaryotic type I sub-subfamily. As to quaternary structure, heterodimer of a large membrane-associated beta subunit and a small pyruvoyl-containing alpha subunit. Pyruvate is required as a cofactor. Post-translationally, is synthesized initially as an inactive proenzyme. Formation of the active enzyme involves a self-maturation process in which the active site pyruvoyl group is generated from an internal serine residue via an autocatalytic post-translational modification. Two non-identical subunits are generated from the proenzyme in this reaction, and the pyruvate is formed at the N-terminus of the alpha chain, which is derived from the carboxyl end of the proenzyme. The autoendoproteolytic cleavage occurs by a canonical serine protease mechanism, in which the side chain hydroxyl group of the serine supplies its oxygen atom to form the C-terminus of the beta chain, while the remainder of the serine residue undergoes an oxidative deamination to produce ammonia and the pyruvoyl prosthetic group on the alpha chain. During this reaction, the Ser that is part of the protease active site of the proenzyme becomes the pyruvoyl prosthetic group, which constitutes an essential element of the active site of the mature decarboxylase.

The protein resides in the cell membrane. It carries out the reaction a 1,2-diacyl-sn-glycero-3-phospho-L-serine + H(+) = a 1,2-diacyl-sn-glycero-3-phosphoethanolamine + CO2. It participates in phospholipid metabolism; phosphatidylethanolamine biosynthesis; phosphatidylethanolamine from CDP-diacylglycerol: step 2/2. In terms of biological role, catalyzes the formation of phosphatidylethanolamine (PtdEtn) from phosphatidylserine (PtdSer). The protein is Phosphatidylserine decarboxylase proenzyme of Actinobacillus pleuropneumoniae serotype 5b (strain L20).